The following is a 303-amino-acid chain: Diaminopimelate epimerase (303 aa).

2 residues coordinate substrate: N15 and N72. C81 (proton donor) is an active-site residue. Substrate is bound by residues 82 to 83 (GN), N169, N202, and 220 to 221 (ER). The Proton acceptor role is filled by C229. Residue 230–231 (GT) coordinates substrate.

This sequence belongs to the diaminopimelate epimerase family. As to quaternary structure, homodimer.

Its subcellular location is the cytoplasm. The catalysed reaction is (2S,6S)-2,6-diaminopimelate = meso-2,6-diaminopimelate. It participates in amino-acid biosynthesis; L-lysine biosynthesis via DAP pathway; DL-2,6-diaminopimelate from LL-2,6-diaminopimelate: step 1/1. In terms of biological role, catalyzes the stereoinversion of LL-2,6-diaminopimelate (L,L-DAP) to meso-diaminopimelate (meso-DAP), a precursor of L-lysine and an essential component of the bacterial peptidoglycan. The sequence is that of Diaminopimelate epimerase from Prochlorococcus marinus (strain MIT 9313).